Consider the following 908-residue polypeptide: Protein translocase subunit SecA (908 aa).

Residues Gln87, 105-109 (GEGKT), and Asp512 each bind ATP. Residues 865–908 (GGDDGSDEMMAHTPMIRDGDKVGRNDPCPCGSGRKYKQCHGKLS) are disordered. A compositionally biased stretch (basic and acidic residues) spans 879–888 (MIRDGDKVGR). Residues Cys892, Cys894, Cys903, and His904 each coordinate Zn(2+). The segment covering 898-908 (RKYKQCHGKLS) has biased composition (basic residues).

Belongs to the SecA family. Monomer and homodimer. Part of the essential Sec protein translocation apparatus which comprises SecA, SecYEG and auxiliary proteins SecDF-YajC and YidC. Requires Zn(2+) as cofactor.

Its subcellular location is the cell inner membrane. It localises to the cytoplasm. The catalysed reaction is ATP + H2O + cellular proteinSide 1 = ADP + phosphate + cellular proteinSide 2.. Functionally, part of the Sec protein translocase complex. Interacts with the SecYEG preprotein conducting channel. Has a central role in coupling the hydrolysis of ATP to the transfer of proteins into and across the cell membrane, serving both as a receptor for the preprotein-SecB complex and as an ATP-driven molecular motor driving the stepwise translocation of polypeptide chains across the membrane. This chain is Protein translocase subunit SecA, found in Shewanella sp. (strain ANA-3).